A 339-amino-acid polypeptide reads, in one-letter code: 4-hydroxythreonine-4-phosphate dehydrogenase (339 aa).

Residues His141 and Thr142 each coordinate substrate. Residues His171, His215, and His270 each contribute to the a divalent metal cation site. Residues Lys278, Asn287, and Arg296 each coordinate substrate.

It belongs to the PdxA family. In terms of assembly, homodimer. Requires Zn(2+) as cofactor. It depends on Mg(2+) as a cofactor. Co(2+) serves as cofactor.

The protein localises to the cytoplasm. The enzyme catalyses 4-(phosphooxy)-L-threonine + NAD(+) = 3-amino-2-oxopropyl phosphate + CO2 + NADH. It functions in the pathway cofactor biosynthesis; pyridoxine 5'-phosphate biosynthesis; pyridoxine 5'-phosphate from D-erythrose 4-phosphate: step 4/5. Catalyzes the NAD(P)-dependent oxidation of 4-(phosphooxy)-L-threonine (HTP) into 2-amino-3-oxo-4-(phosphooxy)butyric acid which spontaneously decarboxylates to form 3-amino-2-oxopropyl phosphate (AHAP). This chain is 4-hydroxythreonine-4-phosphate dehydrogenase, found in Geobacter metallireducens (strain ATCC 53774 / DSM 7210 / GS-15).